The following is a 411-amino-acid chain: Serine/threonine-protein kinase 54 (411 aa).

Ser-43 and Ser-45 each carry phosphoserine; by PHOT1. The Protein kinase domain maps to 108–385 (LIIKSVIARG…EEVVAMLEAI (278 aa)). Residues 114 to 122 (IARGTFGTV) and Lys-135 each bind ATP. Asp-253 serves as the catalytic Proton acceptor. Residue Thr-286 is modified to Phosphothreonine.

It belongs to the protein kinase superfamily. Ser/Thr protein kinase family. In terms of assembly, binds to CBC2. Associates with PHOT2, BLUS1 and PM H(+)-ATPase (e.g. AHA1). In terms of processing, autophosphorylated. Phosphorylated in guard cells by HT1 in response to low CO(2) concentrations and by PHOT1 after blue light (BL) exposure. As to expression, expressed in guard cells.

The protein localises to the cytoplasm. The protein resides in the cytosol. It carries out the reaction L-seryl-[protein] + ATP = O-phospho-L-seryl-[protein] + ADP + H(+). The enzyme catalyses L-threonyl-[protein] + ATP = O-phospho-L-threonyl-[protein] + ADP + H(+). Serine/threonine protein kinase that phosphorylates proteins on serine and threonine residues. Collectively with CBC2, acts as a negative regulator of stomatal opening, probably via the inhibition of plasma membrane-type ATPases (AHA1 and AHA2) activity in guard cells, but in an abscisic acid (ABA)-independent manner. However, at low concentrations of CO(2), together with CBC2, stimulates stomatal opening via the inhibition of S-type anion channels in response to blue light (BL) and red light (RL), thus being a key component to maximize photosynthesis in the light under low CO(2) conditions. Required for temperature decrease in leaves. Downstream target of HIGH LEAF TEMPERATURE1 (HT1) during low CO(2)-induced stomatal opening. Also functions in the signaling pathways of phototropins. The protein is Serine/threonine-protein kinase 54 of Arabidopsis thaliana (Mouse-ear cress).